Consider the following 579-residue polypeptide: DNA ligase 1 (579 aa).

Glu244 provides a ligand contact to ATP. Lys246 acts as the N6-AMP-lysine intermediate in catalysis. Residues Arg251, Arg266, Glu296, Phe342, Arg419, and Lys425 each contribute to the ATP site.

It belongs to the ATP-dependent DNA ligase family. Mg(2+) is required as a cofactor.

The enzyme catalyses ATP + (deoxyribonucleotide)n-3'-hydroxyl + 5'-phospho-(deoxyribonucleotide)m = (deoxyribonucleotide)n+m + AMP + diphosphate.. DNA ligase that seals nicks in double-stranded DNA during DNA replication, DNA recombination and DNA repair. This is DNA ligase 1 from Methanosarcina mazei (strain ATCC BAA-159 / DSM 3647 / Goe1 / Go1 / JCM 11833 / OCM 88) (Methanosarcina frisia).